We begin with the raw amino-acid sequence, 314 residues long: Probable UDP-sugar transporter protein SLC35A4 (314 aa).

Residues 1 to 20 (MIAISADESPESSSPALRLR) lie on the Cytoplasmic side of the membrane. The chain crosses the membrane as a helical span at residues 21–41 (WLFLLLLLVLIYGSHAPLLSL). At 42–54 (CKTQAQIPFSASS) the chain is on the lumenal side. The chain crosses the membrane as a helical span at residues 55–75 (CVLLIETSKLFISFASLLASG). Residues 76–88 (SVSTLRISISMTT) are Cytoplasmic-facing. A helical transmembrane segment spans residues 89–109 (ASPYAVPAVLYAFNNHLVVFM). The Lumenal portion of the chain corresponds to 110 to 145 (QAYMDPSSFQVLSNLKIASTALLYTSCLGKRLHRRQ). The helical transmembrane segment at 146–166 (WFAMGLLVSAGVSHSCFSYDL) threads the bilayer. The Cytoplasmic portion of the chain corresponds to 167–175 (EGKRETAVY). The chain crosses the membrane as a helical span at residues 176 to 196 (ITSWGLLLVLVYCFVSGLAAV). Residues 197-206 (YTERVLKSQR) are Lumenal-facing. A helical membrane pass occupies residues 207–227 (LPLSMQNLFLYTFGVVVNLAS). Over 228–242 (HLSGGEQKGFFEGYS) the chain is Cytoplasmic. The helical transmembrane segment at 243–263 (AVVWVIVAGQVANGLLMSVVM) threads the bilayer. At 264-267 (KHGT) the chain is on the lumenal side. Residues 268–290 (GITRLFVISSAMLVNAVLSWGIL) traverse the membrane as a helical segment. At 291-314 (GVQLTGYFLFPVVLIGWAVYLYYT) the chain is on the cytoplasmic side.

It belongs to the nucleotide-sugar transporter family. SLC35A subfamily.

The protein localises to the golgi apparatus membrane. The enzyme catalyses CDP-L-ribitol(in) + CDP(out) = CDP-L-ribitol(out) + CDP(in). Functionally, mediates the transport of CDP-ribitol. Does not exhibit CMP-sialic acid, UDP-galactose and UDP-N-acetylglucosamine transport activity. The chain is Probable UDP-sugar transporter protein SLC35A4 from Danio rerio (Zebrafish).